The chain runs to 547 residues: Chaperonin GroEL (547 aa).

ATP is bound by residues 30 to 33 (TLGP), lysine 51, 87 to 91 (DGTTT), glycine 415, and aspartate 495.

Belongs to the chaperonin (HSP60) family. In terms of assembly, forms a cylinder of 14 subunits composed of two heptameric rings stacked back-to-back. Interacts with the co-chaperonin GroES.

The protein localises to the cytoplasm. The catalysed reaction is ATP + H2O + a folded polypeptide = ADP + phosphate + an unfolded polypeptide.. Its function is as follows. Together with its co-chaperonin GroES, plays an essential role in assisting protein folding. The GroEL-GroES system forms a nano-cage that allows encapsulation of the non-native substrate proteins and provides a physical environment optimized to promote and accelerate protein folding. The protein is Chaperonin GroEL of Bartonella quintana (strain Toulouse) (Rochalimaea quintana).